Reading from the N-terminus, the 104-residue chain is Large ribosomal subunit protein uL24 (104 aa).

This sequence belongs to the universal ribosomal protein uL24 family. In terms of assembly, part of the 50S ribosomal subunit.

Its function is as follows. One of two assembly initiator proteins, it binds directly to the 5'-end of the 23S rRNA, where it nucleates assembly of the 50S subunit. Functionally, one of the proteins that surrounds the polypeptide exit tunnel on the outside of the subunit. The protein is Large ribosomal subunit protein uL24 of Flavobacterium johnsoniae (strain ATCC 17061 / DSM 2064 / JCM 8514 / BCRC 14874 / CCUG 350202 / NBRC 14942 / NCIMB 11054 / UW101) (Cytophaga johnsonae).